The following is a 388-amino-acid chain: Succinate--CoA ligase [ADP-forming] subunit beta (388 aa).

Residues 9-244 form the ATP-grasp domain; the sequence is KEIFRSMGVA…LEEEDPKEIE (236 aa). Residues K46, 53 to 55, E99, C102, and E107 each bind ATP; that span reads GRG. Residues N199 and D213 each contribute to the Mg(2+) site. Residues N264 and 321 to 323 contribute to the substrate site; that span reads GIM.

This sequence belongs to the succinate/malate CoA ligase beta subunit family. As to quaternary structure, heterotetramer of two alpha and two beta subunits. The cofactor is Mg(2+).

It carries out the reaction succinate + ATP + CoA = succinyl-CoA + ADP + phosphate. The catalysed reaction is GTP + succinate + CoA = succinyl-CoA + GDP + phosphate. The protein operates within carbohydrate metabolism; tricarboxylic acid cycle; succinate from succinyl-CoA (ligase route): step 1/1. In terms of biological role, succinyl-CoA synthetase functions in the citric acid cycle (TCA), coupling the hydrolysis of succinyl-CoA to the synthesis of either ATP or GTP and thus represents the only step of substrate-level phosphorylation in the TCA. The beta subunit provides nucleotide specificity of the enzyme and binds the substrate succinate, while the binding sites for coenzyme A and phosphate are found in the alpha subunit. The polypeptide is Succinate--CoA ligase [ADP-forming] subunit beta (Staphylococcus haemolyticus (strain JCSC1435)).